A 1755-amino-acid polypeptide reads, in one-letter code: Transposon Ty1-PR1 Gag-Pol polyprotein (1755 aa).

Composition is skewed to polar residues over residues 1-23, 48-60, 71-93, and 127-152; these read MESQQLSQHSPISHGSACASVTS, TKANSQQTTTPAS, SPQTAQSHSPQNGPYPQQCMMTQ, and QSQFPQYPSSVGTPLSTPSPESGNTF. Disordered stretches follow at residues 1 to 93, 126 to 173, and 352 to 421; these read MESQ…MMTQ, PQSQ…RPPP, and GSRN…SKST. Residues 153-165 show a composition bias toward low complexity; it reads TDSSSADSDMTST. Residues 299 to 401 are RNA-binding; sequence NNGIHINNKV…NSKSKTARAH (103 aa). Positions 402-418 are enriched in low complexity; sequence NVSTSNNSPSTDNDSIS. Position 416 is a phosphoserine (Ser416). Residue Asp461 is the For protease activity; shared with dimeric partner of the active site. The interval 583–640 is integrase-type zinc finger-like; the sequence is NVHTSESTRKYPYPFIHRMLAHANAQTIRYSLKNNTITYFNESDVDWSSAIDYQCPDC. The Integrase catalytic domain occupies 660–835; the sequence is NSYEPFQYLH…AGLDISTLLP (176 aa). Asp671 and Asp736 together coordinate Mg(2+). Disordered regions lie at residues 956 to 1087, 1092 to 1111, and 1130 to 1187; these read SKAV…ETEK, RSPSIDASPPENNSSHNIVP, and DLPL…DNET. The span at 960–969 shows a compositional bias: low complexity; sequence SPTDSTPPST. The span at 1005–1015 shows a compositional bias: polar residues; the sequence is STPQISNIEST. Positions 1038–1053 are enriched in basic and acidic residues; sequence ESSHASKSKDFRHSDS. Composition is skewed to polar residues over residues 1054–1082 and 1101–1111; these read YSENETNHTNVPISSTGGTNNKTVPQISD and PENNSSHNIVP. The short motif at 1178–1212 is the Bipartite nuclear localization signal element; that stretch reads KKRSLEDNETEIKVSRDTWNTKNMRSLEPPRSKKR. Positions 1338-1476 constitute a Reverse transcriptase Ty1/copia-type domain; sequence NNYYITQLDI…DILGLEIKYQ (139 aa). Mg(2+) is bound by residues Asp1346, Asp1427, Asp1428, Asp1610, Glu1652, and Asp1685. The region spanning 1610 to 1752 is the RNase H Ty1/copia-type domain; the sequence is DASYGNQPYY…IKTFKLLTNK (143 aa).

As to quaternary structure, the capsid protein forms a homotrimer, from which the VLPs are assembled. The protease is a homodimer, whose active site consists of two apposed aspartic acid residues. In terms of processing, initially, virus-like particles (VLPs) are composed of the structural unprocessed proteins Gag and Gag-Pol, and also contain the host initiator methionine tRNA (tRNA(i)-Met) which serves as a primer for minus-strand DNA synthesis, and a dimer of genomic Ty RNA. Processing of the polyproteins occurs within the particle and proceeds by an ordered pathway, called maturation. First, the protease (PR) is released by autocatalytic cleavage of the Gag-Pol polyprotein yielding capsid protein p45 and a Pol-p154 precursor protein. This cleavage is a prerequisite for subsequent processing of Pol-p154 at the remaining sites to release the mature structural and catalytic proteins. Maturation takes place prior to the RT reaction and is required to produce transposition-competent VLPs.

It is found in the cytoplasm. It localises to the nucleus. The catalysed reaction is DNA(n) + a 2'-deoxyribonucleoside 5'-triphosphate = DNA(n+1) + diphosphate. It catalyses the reaction Endonucleolytic cleavage to 5'-phosphomonoester.. Capsid protein (CA) is the structural component of the virus-like particle (VLP), forming the shell that encapsulates the retrotransposons dimeric RNA genome. The particles are assembled from trimer-clustered units and there are holes in the capsid shells that allow for the diffusion of macromolecules. CA also has nucleocapsid-like chaperone activity, promoting primer tRNA(i)-Met annealing to the multipartite primer-binding site (PBS), dimerization of Ty1 RNA and initiation of reverse transcription. Functionally, the aspartyl protease (PR) mediates the proteolytic cleavages of the Gag and Gag-Pol polyproteins after assembly of the VLP. Its function is as follows. Reverse transcriptase/ribonuclease H (RT) is a multifunctional enzyme that catalyzes the conversion of the retro-elements RNA genome into dsDNA within the VLP. The enzyme displays a DNA polymerase activity that can copy either DNA or RNA templates, and a ribonuclease H (RNase H) activity that cleaves the RNA strand of RNA-DNA heteroduplexes during plus-strand synthesis and hydrolyzes RNA primers. The conversion leads to a linear dsDNA copy of the retrotransposon that includes long terminal repeats (LTRs) at both ends. In terms of biological role, integrase (IN) targets the VLP to the nucleus, where a subparticle preintegration complex (PIC) containing at least integrase and the newly synthesized dsDNA copy of the retrotransposon must transit the nuclear membrane. Once in the nucleus, integrase performs the integration of the dsDNA into the host genome. The sequence is that of Transposon Ty1-PR1 Gag-Pol polyprotein (TY1B-PR1) from Saccharomyces cerevisiae (strain ATCC 204508 / S288c) (Baker's yeast).